Reading from the N-terminus, the 267-residue chain is Cytochrome b (267 aa).

4 helical membrane-spanning segments follow: residues 33–53, 77–98, 113–133, and 178–198; these read FGSLLGICLMIQILTGLFLAM, WLIRYLHANGASMFFICLFIHV, WNIGIILFLTTMATAFVGYVL, and FFAFHFILPFIITAFVLVHLL. Heme b-binding residues include H83 and H97. Positions 182 and 196 each coordinate heme b. H201 serves as a coordination point for a ubiquinone. The chain crosses the membrane as a helical span at residues 226 to 246; sequence IKDLLGVILLLMVLMILVLFF.

The protein belongs to the cytochrome b family. The cytochrome bc1 complex contains 11 subunits: 3 respiratory subunits (MT-CYB, CYC1 and UQCRFS1), 2 core proteins (UQCRC1 and UQCRC2) and 6 low-molecular weight proteins (UQCRH/QCR6, UQCRB/QCR7, UQCRQ/QCR8, UQCR10/QCR9, UQCR11/QCR10 and a cleavage product of UQCRFS1). This cytochrome bc1 complex then forms a dimer. Heme b serves as cofactor.

It is found in the mitochondrion inner membrane. Functionally, component of the ubiquinol-cytochrome c reductase complex (complex III or cytochrome b-c1 complex) that is part of the mitochondrial respiratory chain. The b-c1 complex mediates electron transfer from ubiquinol to cytochrome c. Contributes to the generation of a proton gradient across the mitochondrial membrane that is then used for ATP synthesis. The polypeptide is Cytochrome b (MT-CYB) (Abrothrix olivaceus (Olive grass mouse)).